A 110-amino-acid chain; its full sequence is Small ribosomal subunit protein bS16 (110 aa).

Residues 79–110 are disordered; the sequence is AAGVKKREARNNPQKAVPRKERKAQAEAAAKG.

It belongs to the bacterial ribosomal protein bS16 family.

The protein is Small ribosomal subunit protein bS16 of Bradyrhizobium diazoefficiens (strain JCM 10833 / BCRC 13528 / IAM 13628 / NBRC 14792 / USDA 110).